A 198-amino-acid polypeptide reads, in one-letter code: V-type proton ATPase subunit E (198 aa).

It belongs to the V-ATPase E subunit family.

Functionally, produces ATP from ADP in the presence of a proton gradient across the membrane. The sequence is that of V-type proton ATPase subunit E from Borrelia duttonii (strain Ly).